Consider the following 89-residue polypeptide: Small ribosomal subunit protein uS15 (89 aa).

This sequence belongs to the universal ribosomal protein uS15 family. Part of the 30S ribosomal subunit. Forms a bridge to the 50S subunit in the 70S ribosome, contacting the 23S rRNA.

Functionally, one of the primary rRNA binding proteins, it binds directly to 16S rRNA where it helps nucleate assembly of the platform of the 30S subunit by binding and bridging several RNA helices of the 16S rRNA. Forms an intersubunit bridge (bridge B4) with the 23S rRNA of the 50S subunit in the ribosome. This Thermodesulfovibrio yellowstonii (strain ATCC 51303 / DSM 11347 / YP87) protein is Small ribosomal subunit protein uS15.